We begin with the raw amino-acid sequence, 368 residues long: tRNA-specific 2-thiouridylase MnmA (368 aa).

Residues 12 to 19 (GMSGGVDS) and methionine 38 contribute to the ATP site. The tract at residues 98-100 (NPD) is interaction with target base in tRNA. Residue cysteine 103 is the Nucleophile of the active site. Residues cysteine 103 and cysteine 200 are joined by a disulfide bond. Glycine 128 is an ATP binding site. Residues 150–152 (KDQ) form an interaction with tRNA region. Residue cysteine 200 is the Cysteine persulfide intermediate of the active site. An interaction with tRNA region spans residues 313-314 (RY).

Belongs to the MnmA/TRMU family. Interacts with TusE.

The protein resides in the cytoplasm. The catalysed reaction is S-sulfanyl-L-cysteinyl-[protein] + uridine(34) in tRNA + AH2 + ATP = 2-thiouridine(34) in tRNA + L-cysteinyl-[protein] + A + AMP + diphosphate + H(+). Functionally, catalyzes the 2-thiolation of uridine at the wobble position (U34) of tRNA(Lys), tRNA(Glu) and tRNA(Gln), leading to the formation of s(2)U34, the first step of tRNA-mnm(5)s(2)U34 synthesis. Sulfur is provided by IscS, via a sulfur-relay system. Binds ATP and its substrate tRNAs. The protein is tRNA-specific 2-thiouridylase MnmA of Pectobacterium carotovorum subsp. carotovorum (strain PC1).